Here is a 319-residue protein sequence, read N- to C-terminus: Probable ABC transporter permease protein MG189 homolog (319 aa).

6 helical membrane passes run 41-61, 98-118, 134-154, 169-189, 229-249, and 282-302; these read VVLCFFGLMVIFPFYLMLVVA, AIWINSLVTILSIILRLFFTV, LFWFIFLAVLILPESALLIGQ, PAIILGLTMPFVASVFSGFMF, TVSILTAFAAWNSYLWPLLLL, and NLKMAAAILAILPMFIVYFLF. Residues 99–302 enclose the ABC transmembrane type-1 domain; the sequence is IWINSLVTIL…LPMFIVYFLF (204 aa).

It belongs to the binding-protein-dependent transport system permease family. MalFG subfamily.

It localises to the cell membrane. In terms of biological role, probably part of a binding-protein-dependent transport system. Probably responsible for the translocation of the substrate across the membrane. In Mycoplasma pneumoniae (strain ATCC 29342 / M129 / Subtype 1) (Mycoplasmoides pneumoniae), this protein is Probable ABC transporter permease protein MG189 homolog.